The following is a 329-amino-acid chain: Glycerol-3-phosphate dehydrogenase [NAD(P)+] (329 aa).

NADPH is bound by residues tryptophan 15, histidine 35, and lysine 107. Residues lysine 107, glycine 135, and serine 137 each contribute to the sn-glycerol 3-phosphate site. Alanine 139 contributes to the NADPH binding site. 5 residues coordinate sn-glycerol 3-phosphate: lysine 190, aspartate 243, serine 253, arginine 254, and asparagine 255. The active-site Proton acceptor is lysine 190. Arginine 254 provides a ligand contact to NADPH. Leucine 276 and glutamate 278 together coordinate NADPH.

This sequence belongs to the NAD-dependent glycerol-3-phosphate dehydrogenase family.

It localises to the cytoplasm. It catalyses the reaction sn-glycerol 3-phosphate + NAD(+) = dihydroxyacetone phosphate + NADH + H(+). It carries out the reaction sn-glycerol 3-phosphate + NADP(+) = dihydroxyacetone phosphate + NADPH + H(+). The protein operates within membrane lipid metabolism; glycerophospholipid metabolism. Its function is as follows. Catalyzes the reduction of the glycolytic intermediate dihydroxyacetone phosphate (DHAP) to sn-glycerol 3-phosphate (G3P), the key precursor for phospholipid synthesis. The sequence is that of Glycerol-3-phosphate dehydrogenase [NAD(P)+] from Rhodopseudomonas palustris (strain TIE-1).